The sequence spans 349 residues: Phosphoribosylformylglycinamidine cyclo-ligase (349 aa).

This sequence belongs to the AIR synthase family.

Its subcellular location is the cytoplasm. It carries out the reaction 2-formamido-N(1)-(5-O-phospho-beta-D-ribosyl)acetamidine + ATP = 5-amino-1-(5-phospho-beta-D-ribosyl)imidazole + ADP + phosphate + H(+). The protein operates within purine metabolism; IMP biosynthesis via de novo pathway; 5-amino-1-(5-phospho-D-ribosyl)imidazole from N(2)-formyl-N(1)-(5-phospho-D-ribosyl)glycinamide: step 2/2. This is Phosphoribosylformylglycinamidine cyclo-ligase from Listeria monocytogenes serotype 4b (strain CLIP80459).